Reading from the N-terminus, the 278-residue chain is Orotidine 5'-phosphate decarboxylase (278 aa).

Substrate is bound by residues D40, 65-67 (KTH), 96-105 (DRKFIDIGNT), Y230, and R248. The Proton donor role is filled by K98.

It belongs to the OMP decarboxylase family.

It catalyses the reaction orotidine 5'-phosphate + H(+) = UMP + CO2. It participates in pyrimidine metabolism; UMP biosynthesis via de novo pathway; UMP from orotate: step 2/2. This is Orotidine 5'-phosphate decarboxylase (pyrG) from Penicillium chrysogenum (Penicillium notatum).